Consider the following 303-residue polypeptide: Phosphoglycerate mutase 3 (303 aa).

Residues 13 to 20, 26 to 27, Arg-70, 120 to 123, Lys-131, and 147 to 148 contribute to the substrate site; these read RHGQSELN, CG, ERHY, and RR. Residue His-14 is the Tele-phosphohistidine intermediate of the active site. Glu-120 acts as the Proton donor/acceptor in catalysis. The disordered stretch occupies residues 168 to 198; it reads NDQGSSTGYDFKEPNRHLKYGPEEKANERLP. A compositionally biased stretch (basic and acidic residues) spans 177–198; the sequence is DFKEPNRHLKYGPEEKANERLP. 236–237 provides a ligand contact to substrate; the sequence is GS.

Belongs to the phosphoglycerate mutase family. BPG-dependent PGAM subfamily.

It catalyses the reaction (2R)-2-phosphoglycerate = (2R)-3-phosphoglycerate. It participates in carbohydrate degradation; glycolysis; pyruvate from D-glyceraldehyde 3-phosphate: step 3/5. In terms of biological role, could be non-functional. The protein is Phosphoglycerate mutase 3 (GPM3) of Saccharomyces cerevisiae (strain ATCC 204508 / S288c) (Baker's yeast).